The chain runs to 103 residues: A-type ATP synthase subunit F (103 aa).

The protein belongs to the V-ATPase F subunit family. Has multiple subunits with at least A(3), B(3), C, D, E, F, H, I and proteolipid K(x).

Its subcellular location is the cell membrane. Its function is as follows. Component of the A-type ATP synthase that produces ATP from ADP in the presence of a proton gradient across the membrane. In Pyrococcus furiosus (strain ATCC 43587 / DSM 3638 / JCM 8422 / Vc1), this protein is A-type ATP synthase subunit F.